We begin with the raw amino-acid sequence, 102 residues long: uncharacterized protein (102 aa).

The tract at residues 1-102 (MPVEQDGLTG…LANIREQNHQ (102 aa)) is disordered.

This is an uncharacterized protein from Caenorhabditis elegans.